The chain runs to 163 residues: Transcription elongation factor GreB (163 aa).

This sequence belongs to the GreA/GreB family. GreB subfamily.

Its function is as follows. Necessary for efficient RNA polymerase transcription elongation past template-encoded arresting sites. The arresting sites in DNA have the property of trapping a certain fraction of elongating RNA polymerases that pass through, resulting in locked ternary complexes. Cleavage of the nascent transcript by cleavage factors such as GreA or GreB allows the resumption of elongation from the new 3'terminus. GreB releases sequences of up to 9 nucleotides in length. This chain is Transcription elongation factor GreB, found in Vibrio parahaemolyticus serotype O3:K6 (strain RIMD 2210633).